The primary structure comprises 605 residues: Probable Xaa-Pro aminopeptidase P (605 aa).

4 residues coordinate Mn(2+): Asp-402, Asp-413, Glu-511, and Glu-525.

The protein belongs to the peptidase M24B family. It depends on Mn(2+) as a cofactor.

The enzyme catalyses Release of any N-terminal amino acid, including proline, that is linked to proline, even from a dipeptide or tripeptide.. In terms of biological role, catalyzes the removal of a penultimate prolyl residue from the N-termini of peptides. The chain is Probable Xaa-Pro aminopeptidase P (AMPP) from Leptosphaeria maculans (strain JN3 / isolate v23.1.3 / race Av1-4-5-6-7-8) (Blackleg fungus).